A 68-amino-acid chain; its full sequence is Conotoxin Cal14.13b (68 aa).

An N-terminal signal peptide occupies residues 1-20 (MKLCVVIVLLMLAMPFNGGE). Residues 21-68 (ASRFFNQHARSQRSGMKTRGIWCDPPCPEGETCRGGECSDEFNGDMGR) constitute a propeptide that is removed on maturation. Residue methionine 66 is modified to Methionine amide.

In terms of processing, contains 2 disulfide bonds. Expressed by the venom duct.

The protein localises to the secreted. In terms of biological role, probable neurotoxin with unknown target. Possibly targets ion channels. This chain is Conotoxin Cal14.13b, found in Californiconus californicus (California cone).